Reading from the N-terminus, the 1001-residue chain is E3 ubiquitin-protein ligase BRE1B (1001 aa).

Positions 1-40 (MSGLSNKRAAGDGGSGPPEKKMNREEKTTTTLIEPIRLGG) are disordered. The span at 18–28 (PEKKMNREEKT) shows a compositional bias: basic and acidic residues. Lysine 20 is modified (N6-acetyllysine). Position 42 is a phosphoserine (serine 42). Positions 55-91 (KNKKLAERLEQRQACEDELRERIEKLEKRQATDDATL) form a coiled coil. Positions 122 to 142 (TEVPGCQEGLTRDVIPRPDPG) are disordered. Coiled coils occupy residues 189 to 377 (KAAV…LRSL) and 437 to 525 (LQKK…ASGS). N6-acetyllysine occurs at positions 355 and 517. Residues 519–647 (RAQASGSSHC…KAKVEEAKRK (129 aa)) are disordered. The span at 565-576 (ALLAGATSATSS) shows a compositional bias: low complexity. Glycyl lysine isopeptide (Lys-Gly) (interchain with G-Cter in SUMO2) cross-links involve residues lysine 578 and lysine 579. Phosphoserine occurs at positions 584 and 585. 2 stretches are compositionally biased toward basic and acidic residues: residues 602-619 (RGREPEARPKRELREREG) and 633-647 (RADREKAKVEEAKRK). Residues 627–946 (AASTLSRADR…EEIKEYKARL (320 aa)) adopt a coiled-coil conformation. Residues 948–987 (CPCCNTRKKDAVLTKCFHVFCFECVRGRYEARQRKCPKCN) form an RING-type zinc finger.

This sequence belongs to the BRE1 family. In terms of assembly, component of the RNF20/40 complex (also known as BRE1 complex) probably composed of 2 copies of RNF20/BRE1A and 2 copies of RNF40/BRE1B. Interacts with UBE2E1/UBCH6. Interacts with RB1 and WAC.

It is found in the nucleus. The catalysed reaction is S-ubiquitinyl-[E2 ubiquitin-conjugating enzyme]-L-cysteine + [acceptor protein]-L-lysine = [E2 ubiquitin-conjugating enzyme]-L-cysteine + N(6)-ubiquitinyl-[acceptor protein]-L-lysine.. It functions in the pathway protein modification; protein ubiquitination. Component of the RNF20/40 E3 ubiquitin-protein ligase complex that mediates monoubiquitination of 'Lys-120' of histone H2B (H2BK120ub1). H2BK120ub1 gives a specific tag for epigenetic transcriptional activation and is also prerequisite for histone H3 'Lys-4' and 'Lys-79' methylation (H3K4me and H3K79me, respectively). It thereby plays a central role in histone code and gene regulation. The RNF20/40 complex forms a H2B ubiquitin ligase complex in cooperation with the E2 enzyme UBE2A or UBE2B; reports about the cooperation with UBE2E1/UBCH are contradictory. Required for transcriptional activation of Hox genes. This chain is E3 ubiquitin-protein ligase BRE1B (Rnf40), found in Mus musculus (Mouse).